Consider the following 380-residue polypeptide: Chaperone protein DnaJ (380 aa).

Residues M1 to K48 form a disordered region. The 68-residue stretch at D5 to G72 folds into the J domain. Basic residues predominate over residues A24–P34. Positions D35–K48 are enriched in basic and acidic residues. Residues G139–N217 form a CR-type zinc finger. Zn(2+) contacts are provided by C152, C155, C169, C172, C191, C194, C205, and C208. CXXCXGXG motif repeat units follow at residues C152–G159, C169–G176, C191–G198, and C205–G212. Positions K357–A380 are disordered. Over residues S364–A380 the composition is skewed to basic and acidic residues.

The protein belongs to the DnaJ family. In terms of assembly, homodimer. The cofactor is Zn(2+).

The protein localises to the cytoplasm. In terms of biological role, participates actively in the response to hyperosmotic and heat shock by preventing the aggregation of stress-denatured proteins and by disaggregating proteins, also in an autonomous, DnaK-independent fashion. Unfolded proteins bind initially to DnaJ; upon interaction with the DnaJ-bound protein, DnaK hydrolyzes its bound ATP, resulting in the formation of a stable complex. GrpE releases ADP from DnaK; ATP binding to DnaK triggers the release of the substrate protein, thus completing the reaction cycle. Several rounds of ATP-dependent interactions between DnaJ, DnaK and GrpE are required for fully efficient folding. Also involved, together with DnaK and GrpE, in the DNA replication of plasmids through activation of initiation proteins. The chain is Chaperone protein DnaJ from Polaromonas sp. (strain JS666 / ATCC BAA-500).